We begin with the raw amino-acid sequence, 148 residues long: 3-hydroxyacyl-[acyl-carrier-protein] dehydratase FabZ (148 aa).

Residue H55 is part of the active site.

This sequence belongs to the thioester dehydratase family. FabZ subfamily.

The protein localises to the cytoplasm. It catalyses the reaction a (3R)-hydroxyacyl-[ACP] = a (2E)-enoyl-[ACP] + H2O. Involved in unsaturated fatty acids biosynthesis. Catalyzes the dehydration of short chain beta-hydroxyacyl-ACPs and long chain saturated and unsaturated beta-hydroxyacyl-ACPs. This Haemophilus influenzae (strain PittEE) protein is 3-hydroxyacyl-[acyl-carrier-protein] dehydratase FabZ.